The sequence spans 238 residues: Serine protease SplE (238 aa).

Residues 1 to 36 (MNKNIIIKSIAALTILTSVTGVGTTVVEGIQQTAKA) form the signal peptide. Catalysis depends on charge relay system residues His-75, Asp-113, and Ser-191.

This sequence belongs to the peptidase S1B family.

The protein resides in the secreted. The protein is Serine protease SplE (splE) of Staphylococcus aureus (strain USA300).